The sequence spans 500 residues: MALRAKADVWLARPWQCLPRTRALGTTAALAPNTLRPFEAIPQYSRNRWLKMLQILREEGQEGLHLEMHEAFRELGPIFRYSMGRTQVVSVMLPEDAEKLHQVESMHPRRMHLEPWVAHREHRGLSRGVFLLNGPEWRFNRLRLNPHVLSPKAVQKFVPMVDMVARDFLESLKKKVFQNARGSLTMDVQQSLFNYSIEASNFVLFGERLGLLGHDLSPASLTFIHALHSVFKTTPQLMFLPRSLTRWTSTRVWKEHFEAWDVISEYVNRCIRKVHQELRLGSPHTYSGIVAELMSQGALPLDAIRANSIELTAGSVDTTTFPLVMALFELARNPDVQQAVRQESLAAEASVAANPQRAMSDLPLLRAVLKETLRLYPVGGFLERILSSDLVLQNYHVPAGTLVLLYLYSMGRNPAVFPRPEHYLPQRWLERNGSFQHLTFGFGVRQCLGKRLAQVEMLLLLHHVLKSFRVETQEREDVRMVYRFVLAPSSSPLLTFRPVS.

A mitochondrion-targeting transit peptide spans 1–24 (MALRAKADVWLARPWQCLPRTRAL). Phenylalanine 381 serves as a coordination point for 21-hydroxyprogesterone. Cysteine 447 contributes to the heme binding site.

Belongs to the cytochrome P450 family. Heme is required as a cofactor. As to expression, adrenal gland.

The protein resides in the mitochondrion inner membrane. The catalysed reaction is a steroid + 2 reduced [adrenodoxin] + O2 + 2 H(+) = an 11beta-hydroxysteroid + 2 oxidized [adrenodoxin] + H2O. It catalyses the reaction 21-hydroxyprogesterone + 2 reduced [adrenodoxin] + O2 + 2 H(+) = corticosterone + 2 oxidized [adrenodoxin] + H2O. The enzyme catalyses corticosterone + 2 reduced [adrenodoxin] + O2 + 2 H(+) = 18-hydroxycorticosterone + 2 oxidized [adrenodoxin] + H2O. It carries out the reaction 18-hydroxycorticosterone + 2 reduced [adrenodoxin] + O2 + 2 H(+) = aldosterone + 2 oxidized [adrenodoxin] + 2 H2O. The catalysed reaction is 11-deoxycortisol + 2 reduced [adrenodoxin] + O2 + 2 H(+) = cortisol + 2 oxidized [adrenodoxin] + H2O. It catalyses the reaction 21-hydroxyprogesterone + 2 reduced [adrenodoxin] + O2 + 2 H(+) = 18-hydroxy-11-deoxycorticosterone + 2 oxidized [adrenodoxin] + H2O. The enzyme catalyses cortisol + 2 reduced [adrenodoxin] + O2 + 2 H(+) = 18-hydroxycortisol + 2 oxidized [adrenodoxin] + H2O. It carries out the reaction 18-hydroxycortisol + 2 reduced [adrenodoxin] + O2 + 2 H(+) = 18-oxocortisol + 2 oxidized [adrenodoxin] + 2 H2O. It participates in steroid biosynthesis. A cytochrome P450 monooxygenase that catalyzes the biosynthesis of aldosterone, the main mineralocorticoid in the human body responsible for salt and water homeostasis, thus involved in blood pressure regulation, arterial hypertension, and the development of heart failure. Catalyzes three sequential oxidative reactions of 11-deoxycorticosterone (21-hydroxyprogesterone), namely 11-beta hydroxylation, followed by two successive oxidations at C18 yielding 18-hydroxy and then 18-oxo intermediates (that would not leave the enzyme active site during the consecutive hydroxylation reactions), ending with the formation of aldosterone. Can also produce 18-hydroxycortisol and 18-oxocortisol, derived from successive oxidations of cortisol at C18, normally found at very low levels, but significantly increased in primary aldosteronism, the most common form of secondary hypertension. Mechanistically, uses molecular oxygen inserting one oxygen atom into a substrate and reducing the second into a water molecule. Two electrons are provided by NADPH via a two-protein mitochondrial transfer system comprising flavoprotein FDXR (adrenodoxin/ferredoxin reductase) and nonheme iron-sulfur protein FDX1 or FDX2 (adrenodoxin/ferredoxin). Could also be involved in the androgen metabolic pathway. The chain is Cytochrome P450 11B2, mitochondrial (CYP11B2) from Mesocricetus auratus (Golden hamster).